A 120-amino-acid polypeptide reads, in one-letter code: MVSSKEIIQHRAKRVRRQIKAAANGRPRLSVYRSNQNIYAQIIDDVRGCTLASACTLEEGMKKSLRSGSDKKAAFAVGKLIAERAKKSGINEVVFDRGAYVYHGRVKALAEAAREGGLSF.

Belongs to the universal ribosomal protein uL18 family. In terms of assembly, part of the 50S ribosomal subunit; part of the 5S rRNA/L5/L18/L25 subcomplex. Contacts the 5S and 23S rRNAs.

This is one of the proteins that bind and probably mediate the attachment of the 5S RNA into the large ribosomal subunit, where it forms part of the central protuberance. The sequence is that of Large ribosomal subunit protein uL18 from Bartonella bacilliformis (strain ATCC 35685 / KC583 / Herrer 020/F12,63).